We begin with the raw amino-acid sequence, 1182 residues long: MEESQSKQESSTKVAQHEGQEDVDPTFKTKKLMEVELMKHRVQLERNLKLRTFPGARTKQVKEALYPLLTWSSKSKNLFQNFTKLLLFKKLCQRGSENLVRESWYPCVPEEEAHMIDIQDLFGPNLGTQKKPQLVIIEGAAGIGKSTLARLVKRAWKEGKLYRNDFHHVFFFSCRELAQYEQLSLAELIVQGQEVPTAPIRQILSHPEKLLFILDGIDEPAWVLADQNPELCLHWSQTQPVHTLLGSLLGKSILPGASFLLTTRTTALQKFIPSLEQPCQVEVLGFTLFERKNYFYKYFGKKKGGVTTFTLVKSNSALLTLCEVPWVCWLVCTCLKKQMEQGGELSLTSQTTTALCLKYLSLTIPGQHMRTQLRDLCSLAAEGVCQRRTLFSESDLCKQGLDEHAIASFLKIGVLQKQASSLSYSFAHLCLQEFFAAMSYILDDSEERHADMKNDRIVETLVERYGRQNLFEAPTVRFLFGLLSKEELKKIEKLFSCSLHGKTKLKLLWHILGKSQPHQPPCLGLLHCLYENQDMELLTHVMHDLQGTIVPGPDDLAHTVLQTNVKHLVIQTDMDLMVVTFCIKFCCHVRSLQLNRKVQQGHKFTAPGMVLYRWTPITDASWKIFFSNLKLARNLEELDLSGNPLSYYAVHSLCTTLRKRGCQLKTLWLVECGLTSTYCSLLASVLSARSSLTELDLQLNDLGDGGVKMLCEGLRNPACNLSILWLDQASLSDQVIAELRTLEAKNPKLLISSTWKPHVMVPTMNMDKEEVGDSQALLKQQRQQSGDKHMEPLGTEDEFWGPTGPVTTEVVDRERNLYRVQLPMAGSYHCPSTGLHFVVTRAVTIEIEFCAWSQYLDKTPLQQSHMVVGPLFDIKAEQGAVTAVYLPHFVALQEGIVDSSLFHVAHFQEHGMVLETPARVEQHYAVLENPSFSPMGILLRMIPAVGHFIPITSTTLIYYHLYLEDVTFHLYLVPNDCSIRKAIDDEEMKFQFVRINKPPPVDALYLGSRYIVSSSKLVEIIPKELELCYRSPGESQLFSEIDIGHMDSEIKLQIKDKRHMNLKWEALLKPGDLRPALPKIATAPKDAPSLLHFMDQHREQLVARVTSVDPLLDKLHGLVLSEDSYEVVRSETTNQDKMRKLFSLSRSWSWDCKDQFYQALKETHPHLVMDILEKLGGVSVKS.

The segment at 1–23 is disordered; sequence MEESQSKQESSTKVAQHEGQEDV. In terms of domain architecture, NACHT spans 133 to 442; sequence QLVIIEGAAG…EFFAAMSYIL (310 aa). Position 139 to 146 (139 to 146) interacts with ATP; it reads GAAGIGKS. LRR repeat units follow at residues 634–655, 691–711, and 720–743; these read NLEE…SLCT, SLTE…KMLC, and NLSI…RTLE. A disordered region spans residues 780–806; that stretch reads QQRQQSGDKHMEPLGTEDEFWGPTGPV. The segment at 799-932 is ZU5; sequence FWGPTGPVTT…HYAVLENPSF (134 aa). The 284-residue stretch at 799-1082 folds into the FIIND domain; sequence FWGPTGPVTT…LRPALPKIAT (284 aa). Residues 933–1082 are UPA; that stretch reads SPMGILLRMI…LRPALPKIAT (150 aa). The CARD domain maps to 1092–1175; that stretch reads HFMDQHREQL…HLVMDILEKL (84 aa).

Belongs to the NLRP family. In terms of assembly, interacts (via LRR repeats) with BCL2 and BCL2L1 (via the loop between motifs BH4 and BH3). Interacts with NOD2; this interaction is enhanced in the presence of muramyl dipeptide (MDP) and increases IL1B release. Interacts with EIF2AK2/PKR; this interaction requires EIF2AK2 activity, is accompanied by EIF2AK2 autophosphorylation and promotes inflammasome assembly in response to danger-associated signals. Interacts with MEFV; this interaction targets Nlrp1a to degradation by autophagy, hence preventing excessive IL1B- and IL18-mediated inflammation. Interacts with DPP9; leading to inhibit activation of the inflammasome. DPP9 acts via formation of a ternary complex, composed of a DPP9 homodimer, one full-length Nlrp1a protein, and one cleaved C-terminus of Nlrp1a (NACHT, LRR and PYD domains-containing protein 1a, C-terminus). Interacts with DPP8; leading to inhibit activation of the inflammasome, probably via formation of a ternary complex with DPP8. As to quaternary structure, interacts with the C-terminal part of Nlrp1a (NACHT, LRR and PYD domains-containing protein 1a, C-terminus) in absence of pathogens and other damage-associated signals. Interacts with the N-terminal part of Nlrp1a (NACHT, LRR and PYD domains-containing protein 1a, N-terminus) in absence of pathogens and other damage-associated signals. Homomultimer; forms the Nlrp1a inflammasome polymeric complex, a filament composed of homopolymers of this form in response to pathogens and other damage-associated signals. Interacts (via CARD domain) with CASP1 (via CARD domain); leading to CASP1 activation. Post-translationally, autocatalytically cleaved. Autocatalytic cleavage in FIIND region occurs constitutively, prior to activation signals, and is required for inflammasome activity (IL1B release), possibly by facilitating CASP1 binding. Both N- and C-terminal parts remain associated non-covalently. In terms of processing, ubiquitinated in response to pathogen-associated signals, leading to its degradation by the proteasome and subsequent release of the cleaved C-terminal part of the protein (NACHT, LRR and PYD domains-containing protein 1a, C-terminus), which polymerizes and forms the Nlrp1a inflammasome. In terms of tissue distribution, highly expressed in hematopoietic stem cells and progenitor cells of both myeloid and lymphoid origin. The expression is highly strain-dependent. Not expressed in Balb/cJ animals, but widely expressed in C57BL/6J. Expressed in macrophages resistant to Bacillus anthracis lethal toxin, but not in toxin-sensitive macrophages, except in CAST/EiJ strain.

The protein resides in the cytoplasm. It is found in the cytosol. It localises to the nucleus. The protein localises to the inflammasome. Its activity is regulated as follows. Nlrp1a inflammasome is activated by pathogens and other damage-associated signals: activation promotes ubiquitination and degradation of the N-terminal part, releasing the cleaved C-terminal part of the protein (NACHT, LRR and PYD domains-containing protein 1a, C-terminus), which polymerizes and forms the Nlrp1a inflammasome. Nlrp1a inflammasome is inhibited by DPP8 and DPP9, which sequester the C-terminal fragment of Nlrp1a (NACHT, LRR and PYD domains-containing protein 1a, C-terminus) in a ternary complex, thereby preventing Nlrp1a oligomerization and activation. Nlrp1a inflammasome is activated by Val-boroPro (Talabostat, PT-100), an inhibitor of dipeptidyl peptidases DPP8 and DPP9. Val-boroPro relieves inhibition of DPP8 and/or DPP9 by promoting disruption of the ternary complex, releasing its C-terminal part from autoinhibition. Acts as the sensor component of the Nlrp1a inflammasome, which mediates inflammasome activation in response to various pathogen-associated signals, leading to subsequent pyroptosis. Inflammasomes are supramolecular complexes that assemble in the cytosol in response to pathogens and other damage-associated signals and play critical roles in innate immunity and inflammation. Acts as a recognition receptor (PRR): recognizes specific pathogens and other damage-associated signals, and mediates the formation of the inflammasome polymeric complex. In response to pathogen-associated signals, the N-terminal part of Nlrp1a is degraded by the proteasome, releasing the cleaved C-terminal part of the protein (NACHT, LRR and PYD domains-containing protein 1a, C-terminus), which polymerizes to initiate the formation of the inflammasome complex: the inflammasome recruits pro-caspase-1 (proCASP1) and promotes caspase-1 (CASP1) activation, which subsequently cleaves and activates inflammatory cytokines IL1B and IL18 and gasdermin-D (GSDMD), leading to pyroptosis. In the absence of GSDMD expression, the Nlrp1a inflammasome is able to recruit and activate CASP8, leading to activation of gasdermin-E (GSDME). Activation of Nlrp1a inflammasome is also required for HMGB1 secretion; the active cytokines and HMGB1 stimulate inflammatory responses. When activated in the bone marrow, induces the pyroptosis of hematopoietic stem cells and progenitor cells of both myeloid and lymphoid lineages, hence allowing the removal of damaged cells, and the release of IL1B, which induces granulopoiesis. Its function is as follows. Constitutes the precursor of the Nlrp1a inflammasome, which mediates autoproteolytic processing within the FIIND domain to generate the N-terminal and C-terminal parts, which are associated non-covalently in absence of pathogens and other damage-associated signals. Functionally, regulatory part that prevents formation of the Nlrp1a inflammasome: in absence of pathogens and other damage-associated signals, interacts with the C-terminal part of Nlrp1a (NACHT, LRR and PYD domains-containing protein 1a, C-terminus), preventing activation of the Nlrp1a inflammasome. In response to pathogen-associated signals, this part is ubiquitinated and degraded by the proteasome, releasing the cleaved C-terminal part of the protein, which polymerizes and forms the Nlrp1a inflammasome. In terms of biological role, constitutes the active part of the Nlrp1a inflammasome. In absence of pathogens and other damage-associated signals, interacts with the N-terminal part of Nlrp1a (NACHT, LRR and PYD domains-containing protein 1a, N-terminus), preventing activation of the Nlrp1a inflammasome. In response to pathogen-associated signals, the N-terminal part of Nlrp1a is degraded by the proteasome, releasing this form, which polymerizes to form the Nlrp1a inflammasome complex: the Nlrp1a inflammasome complex then directly recruits pro-caspase-1 (proCASP1) and promotes caspase-1 (CASP1) activation, leading to gasdermin-D (GSDMD) cleavage and subsequent pyroptosis. The polypeptide is NACHT, LRR and PYD domains-containing protein 1a (Mus musculus (Mouse)).